Reading from the N-terminus, the 518-residue chain is Glutamate--cysteine ligase (518 aa).

The protein belongs to the glutamate--cysteine ligase type 1 family. Type 1 subfamily.

The catalysed reaction is L-cysteine + L-glutamate + ATP = gamma-L-glutamyl-L-cysteine + ADP + phosphate + H(+). It participates in sulfur metabolism; glutathione biosynthesis; glutathione from L-cysteine and L-glutamate: step 1/2. The polypeptide is Glutamate--cysteine ligase (Escherichia coli O127:H6 (strain E2348/69 / EPEC)).